The chain runs to 689 residues: Glycine--tRNA ligase beta subunit (689 aa).

This sequence belongs to the class-II aminoacyl-tRNA synthetase family. Tetramer of two alpha and two beta subunits.

Its subcellular location is the cytoplasm. The enzyme catalyses tRNA(Gly) + glycine + ATP = glycyl-tRNA(Gly) + AMP + diphosphate. This chain is Glycine--tRNA ligase beta subunit, found in Dichelobacter nodosus (strain VCS1703A).